An 855-amino-acid polypeptide reads, in one-letter code: Zinc finger protein 814 (855 aa).

In terms of domain architecture, KRAB spans 15–91; it reads VTFEDVAVNF…PMAGVSPKKA (77 aa). The C2H2-type 1; degenerate zinc finger occupies 120 to 142; it reads HRCEAWGNKLYDSGNFHQHQNEH. 22 consecutive C2H2-type zinc fingers follow at residues 242 to 264, 269 to 291, 296 to 318, 324 to 346, 352 to 374, 380 to 402, 408 to 430, 436 to 458, 464 to 486, 492 to 514, 520 to 542, 548 to 570, 576 to 598, 604 to 626, 632 to 654, 660 to 682, 688 to 710, 716 to 738, 744 to 766, 772 to 794, 800 to 822, and 828 to 850; these read YVCC…QRVH, HECG…QRVH, YECG…QRVH, YECG…QRFH, YGCE…QRVH, FKCG…QRVH, YQCG…QRVH, YECG…QQIH, YGCG…QRVH, YECG…QRMH, YKCG…QRVH, FKCG…QHGH, YVCR…QRIH, YACE…QRVH, YECN…KRIH, YECS…KRVH, and YKCE…QSSH. A Glycyl lysine isopeptide (Lys-Gly) (interchain with G-Cter in SUMO2) cross-link involves residue Lys335. A Glycyl lysine isopeptide (Lys-Gly) (interchain with G-Cter in SUMO2) cross-link involves residue Lys391.

In Homo sapiens (Human), this protein is Zinc finger protein 814 (ZNF814).